The chain runs to 293 residues: Ribosomal protein L11 methyltransferase (293 aa).

Residues Thr-145, Gly-166, Asp-188, and Asn-229 each contribute to the S-adenosyl-L-methionine site.

This sequence belongs to the methyltransferase superfamily. PrmA family.

Its subcellular location is the cytoplasm. The catalysed reaction is L-lysyl-[protein] + 3 S-adenosyl-L-methionine = N(6),N(6),N(6)-trimethyl-L-lysyl-[protein] + 3 S-adenosyl-L-homocysteine + 3 H(+). In terms of biological role, methylates ribosomal protein L11. This chain is Ribosomal protein L11 methyltransferase, found in Halorhodospira halophila (strain DSM 244 / SL1) (Ectothiorhodospira halophila (strain DSM 244 / SL1)).